Here is a 353-residue protein sequence, read N- to C-terminus: MSEIFDVNAAIYPFPARPVPLDTNEKAFYREKIKTLLKQRDAVLVAHYYTDPEIQALAEETGGCVADSLEMARFGNNHPASTLLVAGVRFMGETAKILNPEKKVLMPTLNAECSLDLGCPVDEFTAFCDSHPDRTVVVYANTSAAVKAKADWVVTSSIAVELIEHLDSLGEKIIWAPDRHLGSYVQKKSGADVLCWQGACIVHDEFKTQALARMKALYPDAAVLVHPESPQAVVDMADAVGSTSQLIQAAKTLPQKTLIVATDRGIFYKMQQACPDKELFEAPTAGEGATCRSCAHCPWMAMNGLRAIAEGLEQGGVMHEIHVDEELRQQALIPLNRMLDFANQLKLQVKGNA.

Positions 47 and 68 each coordinate iminosuccinate. Cysteine 113 contacts [4Fe-4S] cluster. Iminosuccinate-binding positions include 139 to 141 (YAN) and serine 156. Residue cysteine 200 coordinates [4Fe-4S] cluster. Iminosuccinate contacts are provided by residues 226–228 (HPE) and threonine 243. Cysteine 297 is a [4Fe-4S] cluster binding site.

This sequence belongs to the quinolinate synthase family. Type 1 subfamily. Requires [4Fe-4S] cluster as cofactor.

Its subcellular location is the cytoplasm. The catalysed reaction is iminosuccinate + dihydroxyacetone phosphate = quinolinate + phosphate + 2 H2O + H(+). The protein operates within cofactor biosynthesis; NAD(+) biosynthesis; quinolinate from iminoaspartate: step 1/1. In terms of biological role, catalyzes the condensation of iminoaspartate with dihydroxyacetone phosphate to form quinolinate. The chain is Quinolinate synthase from Yersinia pestis bv. Antiqua (strain Antiqua).